The primary structure comprises 407 residues: Peptidase T (407 aa).

His-81 lines the Zn(2+) pocket. Asp-83 is a catalytic residue. Position 142 (Asp-142) interacts with Zn(2+). Residue Glu-176 is the Proton acceptor of the active site. Zn(2+)-binding residues include Glu-177, Asp-199, and His-381.

The protein belongs to the peptidase M20B family. The cofactor is Zn(2+).

It localises to the cytoplasm. It catalyses the reaction Release of the N-terminal residue from a tripeptide.. Functionally, cleaves the N-terminal amino acid of tripeptides. This is Peptidase T from Streptococcus pneumoniae (strain JJA).